The primary structure comprises 248 residues: PF03932 family protein CutC (248 aa).

The protein belongs to the CutC family.

It is found in the cytoplasm. The protein is PF03932 family protein CutC of Porphyromonas gingivalis (strain ATCC 33277 / DSM 20709 / CIP 103683 / JCM 12257 / NCTC 11834 / 2561).